Consider the following 262-residue polypeptide: Phosphatidylglycerol--prolipoprotein diacylglyceryl transferase (262 aa).

4 helical membrane-spanning segments follow: residues 17–37 (FAIHWYGLMYLMAFVQFLLLG), 59–79 (LLFAGVLGVVLGGRLGYTLFY), 94–114 (IWEGGMSFHGGLLGVLAALYW), and 121–141 (TTFFVVSDLVAPLVPFGLAFG). Arg142 is a binding site for a 1,2-diacyl-sn-glycero-3-phospho-(1'-sn-glycerol). The next 3 membrane-spanning stretches (helical) occupy residues 176–196 (QIYQLLGEGVLLGIALWFYAG), 201–221 (VGQVSGFFLLGYGICRFLAEY), and 231–251 (LLGLGLSMGQWLCVPMIFFGI).

This sequence belongs to the Lgt family.

It localises to the cell inner membrane. The enzyme catalyses L-cysteinyl-[prolipoprotein] + a 1,2-diacyl-sn-glycero-3-phospho-(1'-sn-glycerol) = an S-1,2-diacyl-sn-glyceryl-L-cysteinyl-[prolipoprotein] + sn-glycerol 1-phosphate + H(+). Its pathway is protein modification; lipoprotein biosynthesis (diacylglyceryl transfer). Its function is as follows. Catalyzes the transfer of the diacylglyceryl group from phosphatidylglycerol to the sulfhydryl group of the N-terminal cysteine of a prolipoprotein, the first step in the formation of mature lipoproteins. The polypeptide is Phosphatidylglycerol--prolipoprotein diacylglyceryl transferase (Polynucleobacter necessarius subsp. necessarius (strain STIR1)).